The following is a 569-amino-acid chain: Vacuolar protein sorting-associated protein 45 homolog (569 aa).

The protein belongs to the STXBP/unc-18/SEC1 family. As to quaternary structure, interacts with both SYP41 or SYP42 and VTI12, but in different domains of the trans-Golgi network. Does not interact on the pervacuolar compartment with VTI11, SYP21 or SYP22, or on the cis-Golgi with SYP31. Interacts at the trans-Golgi network (TGN) with the SYP41/SYP61/VTI12 SNARE complex. In terms of tissue distribution, highly expressed in roots, lower expression in leaves, stems and flowers.

Its subcellular location is the golgi apparatus. The protein localises to the trans-Golgi network membrane. It localises to the early endosome. In terms of biological role, involved in the protein transport to the vacuole, probably at the level of vesicle fusion at the trans-Golgi network (TGN) and not in transport from the TGN to the prevacuolar compartment, by promoting the recycling of vacuolar sorting receptors back to the TGN. Involved in early endosomal vesicle trafficking, particularly at the trans-Golgi-network/early endosome (TGN/EE) thus residing in early endocytic route. Together with BIG5/BEN1 required for polar PIN-FORMED (PIN) proteins localization, for their dynamic repolarization, and consequently for auxin activity gradient formation and auxin-related developmental processes (e.g. embryonic patterning, organogenesis and vasculature venation patterning). Necessary for pollen germination and for cell expansion. Binds syntaxins. This is Vacuolar protein sorting-associated protein 45 homolog from Arabidopsis thaliana (Mouse-ear cress).